The sequence spans 155 residues: Small ribosomal subunit protein bS6 (155 aa).

The disordered stretch occupies residues 94-155 (EEHETEPSAM…RDDNSDGGQE (62 aa)). Over residues 107 to 149 (RGDRGDRGDRRGGDRFGDRDRGDRGDRGSSRFGDRERPRRDDN) the composition is skewed to basic and acidic residues.

Belongs to the bacterial ribosomal protein bS6 family.

Its function is as follows. Binds together with bS18 to 16S ribosomal RNA. The protein is Small ribosomal subunit protein bS6 of Parvibaculum lavamentivorans (strain DS-1 / DSM 13023 / NCIMB 13966).